The following is a 579-amino-acid chain: Salivary alpha-glucosidase (579 aa).

The signal sequence occupies residues 1 to 18; the sequence is MKIFVPLLSFLLAGLTTG. Residues aspartate 37, aspartate 39, aspartate 41, isoleucine 43, aspartate 45, and asparagine 118 each coordinate Ca(2+). 2 N-linked (GlcNAc...) asparagine glycosylation sites follow: asparagine 118 and asparagine 151. Aspartate 189 contributes to the Ca(2+) binding site. The active-site Nucleophile is the aspartate 219. 3 residues coordinate Ca(2+): tyrosine 223, leucine 224, and glutamate 226. The N-linked (GlcNAc...) asparagine glycan is linked to asparagine 282. Glutamate 290 (proton donor) is an active-site residue. N-linked (GlcNAc...) asparagine glycosylation is found at asparagine 304, asparagine 325, and asparagine 401. An N-acetyl-beta-D-glucosamine-binding site is contributed by asparagine 325.

Belongs to the glycosyl hydrolase 13 family. In terms of tissue distribution, saliva (at protein level). Proximal lateral lobes of the salivary gland (at protein level).

The protein resides in the secreted. The catalysed reaction is Hydrolysis of terminal, non-reducing (1-&gt;4)-linked alpha-D-glucose residues with release of alpha-D-glucose.. Its function is as follows. Functions as a glucosidase that shows high activity toward sucrose, a major component of nectar. Assists the mosquito in its sugar-feeding capabilities. This Aedes aegypti (Yellowfever mosquito) protein is Salivary alpha-glucosidase.